Reading from the N-terminus, the 335-residue chain is MSHAGAIAAIGVALIAAALFSAIHKIEEGHVGVYYRGGALLTSTSGPGFHLMLPFITSFKSVQSTMQTDEVKNVPCGTSGGVMIYFDRIEVVNYLIPSAVYDIVKNYTADYDKTLIFNKIHHELNQFCSVHNLQEVYIELFDQIDENLKLALQKDLNSMAPGLVIQAVRVTKPNIPEAIRRNYELMESEKTKLLIAAQKQKVVEKEAETERKKAIIEAEKVAQVAEIKYGQKVMEKETEKKISEIEDSAFVAREKAKADAEYYTSQKTADANRLKLTPEYLQLVKYQAIAANSKIYFGQDIPNMFMDSSAGPSVQSATLLQDDSPALNEPAVGDE.

Residues 1–2 (MS) lie on the Cytoplasmic side of the membrane. The chain crosses the membrane as a helical span at residues 3 to 23 (HAGAIAAIGVALIAAALFSAI). The Lumenal portion of the chain corresponds to 24–335 (HKIEEGHVGV…ALNEPAVGDE (312 aa)). Asn-106 carries an N-linked (GlcNAc...) asparagine glycan. Positions 310–321 (AGPSVQSATLLQ) are enriched in polar residues. The disordered stretch occupies residues 310–335 (AGPSVQSATLLQDDSPALNEPAVGDE).

This sequence belongs to the band 7/mec-2 family.

The protein localises to the endoplasmic reticulum membrane. Its function is as follows. Mediates the endoplasmic reticulum-associated degradation (ERAD) of inositol 1,4,5-trisphosphate receptors (IP3Rs). Promotes sterol-accelerated ERAD of HMGCR. Involved in regulation of cellular cholesterol homeostasis by regulation the SREBP signaling pathway. This Xenopus tropicalis (Western clawed frog) protein is Erlin-2 (erlin2).